Reading from the N-terminus, the 301-residue chain is Acetylglutamate kinase (301 aa).

Residues 68–69 (GG), Arg-90, and Asn-195 contribute to the substrate site.

This sequence belongs to the acetylglutamate kinase family. ArgB subfamily.

Its subcellular location is the cytoplasm. It carries out the reaction N-acetyl-L-glutamate + ATP = N-acetyl-L-glutamyl 5-phosphate + ADP. It functions in the pathway amino-acid biosynthesis; L-arginine biosynthesis; N(2)-acetyl-L-ornithine from L-glutamate: step 2/4. Its function is as follows. Catalyzes the ATP-dependent phosphorylation of N-acetyl-L-glutamate. This chain is Acetylglutamate kinase, found in Pseudomonas putida (strain GB-1).